Reading from the N-terminus, the 119-residue chain is MRQNTILENVTSAQLRSDIPEFRAGDTVKVYAKIVEGSRERIQLFEGVVIKRKGSGIQATYTVRKISSGVGVERTFPLHSPRVEKIEVVRFGAVRRAKLYYLRALQGKAARIKERRRDV.

The protein belongs to the bacterial ribosomal protein bL19 family.

Its function is as follows. This protein is located at the 30S-50S ribosomal subunit interface and may play a role in the structure and function of the aminoacyl-tRNA binding site. This chain is Large ribosomal subunit protein bL19, found in Leuconostoc citreum (strain KM20).